The following is a 276-amino-acid chain: Mitochondrial outer membrane protein porin of 36 kDa (276 aa).

Belongs to the eukaryotic mitochondrial porin (TC 1.B.8.1) family.

The protein localises to the mitochondrion outer membrane. Functionally, forms a channel through the cell membrane that allows diffusion of small hydrophilic molecules. The channel adopts an open conformation at low or zero membrane potential and a closed conformation at potentials above 30-40 mV. The open state has a weak anion selectivity whereas the closed state is cation-selective. This is Mitochondrial outer membrane protein porin of 36 kDa from Solanum tuberosum (Potato).